We begin with the raw amino-acid sequence, 556 residues long: Formate--tetrahydrofolate ligase (556 aa).

Thr65–Thr72 serves as a coordination point for ATP.

The protein belongs to the formate--tetrahydrofolate ligase family.

It catalyses the reaction (6S)-5,6,7,8-tetrahydrofolate + formate + ATP = (6R)-10-formyltetrahydrofolate + ADP + phosphate. The protein operates within one-carbon metabolism; tetrahydrofolate interconversion. This Lachnoclostridium phytofermentans (strain ATCC 700394 / DSM 18823 / ISDg) (Clostridium phytofermentans) protein is Formate--tetrahydrofolate ligase.